A 102-amino-acid chain; its full sequence is Small ribosomal subunit protein uS10 (102 aa).

It belongs to the universal ribosomal protein uS10 family. In terms of assembly, part of the 30S ribosomal subunit.

Involved in the binding of tRNA to the ribosomes. This Pelagibacter ubique (strain HTCC1062) protein is Small ribosomal subunit protein uS10.